Consider the following 529-residue polypeptide: Bifunctional purine biosynthesis protein PurH (529 aa).

Positions 1-148 (MQQRRPVRRA…KNHKDVAIVV (148 aa)) constitute an MGS-like domain.

Belongs to the PurH family.

It carries out the reaction (6R)-10-formyltetrahydrofolate + 5-amino-1-(5-phospho-beta-D-ribosyl)imidazole-4-carboxamide = 5-formamido-1-(5-phospho-D-ribosyl)imidazole-4-carboxamide + (6S)-5,6,7,8-tetrahydrofolate. The catalysed reaction is IMP + H2O = 5-formamido-1-(5-phospho-D-ribosyl)imidazole-4-carboxamide. Its pathway is purine metabolism; IMP biosynthesis via de novo pathway; 5-formamido-1-(5-phospho-D-ribosyl)imidazole-4-carboxamide from 5-amino-1-(5-phospho-D-ribosyl)imidazole-4-carboxamide (10-formyl THF route): step 1/1. It functions in the pathway purine metabolism; IMP biosynthesis via de novo pathway; IMP from 5-formamido-1-(5-phospho-D-ribosyl)imidazole-4-carboxamide: step 1/1. In Klebsiella pneumoniae subsp. pneumoniae (strain ATCC 700721 / MGH 78578), this protein is Bifunctional purine biosynthesis protein PurH.